A 468-amino-acid polypeptide reads, in one-letter code: Adenosylhomocysteinase (468 aa).

The substrate site is built by Thr-57, Asp-132, and Glu-194. 195-197 (TTT) contacts NAD(+). Lys-224 and Asp-228 together coordinate substrate. Residues Asn-229, 258-263 (GFGDVG), Glu-281, Asn-316, 337-339 (IGH), and Asn-382 each bind NAD(+).

The protein belongs to the adenosylhomocysteinase family. The cofactor is NAD(+).

It is found in the cytoplasm. The enzyme catalyses S-adenosyl-L-homocysteine + H2O = L-homocysteine + adenosine. It participates in amino-acid biosynthesis; L-homocysteine biosynthesis; L-homocysteine from S-adenosyl-L-homocysteine: step 1/1. Its function is as follows. May play a key role in the regulation of the intracellular concentration of adenosylhomocysteine. This chain is Adenosylhomocysteinase, found in Methylorubrum populi (strain ATCC BAA-705 / NCIMB 13946 / BJ001) (Methylobacterium populi).